The chain runs to 183 residues: Cell division protein ZapC (183 aa).

Belongs to the ZapC family. As to quaternary structure, interacts directly with FtsZ.

Its subcellular location is the cytoplasm. In terms of biological role, contributes to the efficiency of the cell division process by stabilizing the polymeric form of the cell division protein FtsZ. Acts by promoting interactions between FtsZ protofilaments and suppressing the GTPase activity of FtsZ. This chain is Cell division protein ZapC, found in Xenorhabdus bovienii (strain SS-2004) (Xenorhabdus nematophila subsp. bovienii).